Consider the following 843-residue polypeptide: Aconitase AMT8-2 (843 aa).

A substrate-binding site is contributed by 258-260; it reads DSH. Residues cysteine 450, cysteine 513, and cysteine 516 each coordinate [4Fe-4S] cluster. Substrate-binding positions include arginine 536, arginine 541, and 712-713; that span reads SR.

It belongs to the aconitase/IPM isomerase family.

It participates in mycotoxin biosynthesis. Its function is as follows. Aconitase; part of the gene clusters that mediate the biosynthesis of AM-toxins, host-selective toxins (HSTs) causing Alternaria blotch on apple, a worldwide distributed disease. AM-toxins are cyclic depsipeptides containing the 3 residues 2-hydroxy-isovaleric acid (2-HIV), dehydroalanine, L-alanine which are common for all 3 AM-toxins I to III. The fourth precursor is L-alpha-amino-methoxyphenyl-valeric acid (L-Amv) for AM-toxin I, L-alpha-amino-phenyl-valeric acid (L-Apv) for AM-toxin II, and L-alpha-amino-hydroxyphenyl-valeric acid (L-Ahv) for AM-toxin III. AM-toxins have two target sites for affecting susceptible apple cells; they cause invagination of the plasma membrane and electrolyte loss and chloroplast disorganization. The non-ribosomal peptide synthetase AMT1 contains 4 catalytic modules and is responsible for activation of each residue in AM-toxin. The aldo-keto reductase AMT2 catalyzes the conversion of 2-keto-isovaleric acid (2-KIV) to 2-hydroxy-isovaleric acid (2-HIV), one of the precursor residues incorporated by AMT1 during AM-toxin biosynthesis, by reduction of its ketone to an alcohol. The cytochrome P450 monooxygenase AMT3 and the thioesterase AMT4 are also important for AM-toxin production, but their exact function within the AM-toxin biosynthesis are not known yet. Up to 21 proteins (including AMT1 to AMT4) are predicted to be involved in AM-toxin biosynthesis since their expression ishighly up-regulated in AM-toxin-producing cultures. This Alternaria alternata (Alternaria rot fungus) protein is Aconitase AMT8-2.